Here is a 180-residue protein sequence, read N- to C-terminus: Large ribosomal subunit protein uL5 (180 aa).

The protein belongs to the universal ribosomal protein uL5 family. As to quaternary structure, part of the 50S ribosomal subunit; part of the 5S rRNA/L5/L18/L25 subcomplex. Contacts the 5S rRNA and the P site tRNA. Forms a bridge to the 30S subunit in the 70S ribosome.

Its function is as follows. This is one of the proteins that bind and probably mediate the attachment of the 5S RNA into the large ribosomal subunit, where it forms part of the central protuberance. In the 70S ribosome it contacts protein S13 of the 30S subunit (bridge B1b), connecting the 2 subunits; this bridge is implicated in subunit movement. Contacts the P site tRNA; the 5S rRNA and some of its associated proteins might help stabilize positioning of ribosome-bound tRNAs. This is Large ribosomal subunit protein uL5 from Clostridium botulinum (strain ATCC 19397 / Type A).